A 36-amino-acid polypeptide reads, in one-letter code: Potassium channel toxin alpha-KTx 6.14 (36 aa).

4 disulfide bridges follow: C5-C25, C11-C30, C15-C32, and C20-C35.

Expressed by the venom gland.

It localises to the secreted. In terms of biological role, blocks Shaker B channels expressed in Sf9 cells, with a dissociation constant of 52 nM. This Hoffmannihadrurus gertschi (Scorpion) protein is Potassium channel toxin alpha-KTx 6.14.